Consider the following 120-residue polypeptide: UPF0091 protein PH1455 (120 aa).

This sequence belongs to the UPF0091 family.

The protein is UPF0091 protein PH1455 of Pyrococcus horikoshii (strain ATCC 700860 / DSM 12428 / JCM 9974 / NBRC 100139 / OT-3).